The chain runs to 179 residues: Large ribosomal subunit protein uL5 (179 aa).

Belongs to the universal ribosomal protein uL5 family. As to quaternary structure, part of the 50S ribosomal subunit; part of the 5S rRNA/L5/L18/L25 subcomplex. Contacts the 5S rRNA and the P site tRNA. Forms a bridge to the 30S subunit in the 70S ribosome.

Its function is as follows. This is one of the proteins that bind and probably mediate the attachment of the 5S RNA into the large ribosomal subunit, where it forms part of the central protuberance. In the 70S ribosome it contacts protein S13 of the 30S subunit (bridge B1b), connecting the 2 subunits; this bridge is implicated in subunit movement. Contacts the P site tRNA; the 5S rRNA and some of its associated proteins might help stabilize positioning of ribosome-bound tRNAs. This is Large ribosomal subunit protein uL5 from Klebsiella pneumoniae (strain 342).